Reading from the N-terminus, the 244-residue chain is 1-(5-phosphoribosyl)-5-[(5-phosphoribosylamino)methylideneamino] imidazole-4-carboxamide isomerase (244 aa).

D8 (proton acceptor) is an active-site residue. Catalysis depends on D131, which acts as the Proton donor.

This sequence belongs to the HisA/HisF family.

It is found in the cytoplasm. The catalysed reaction is 1-(5-phospho-beta-D-ribosyl)-5-[(5-phospho-beta-D-ribosylamino)methylideneamino]imidazole-4-carboxamide = 5-[(5-phospho-1-deoxy-D-ribulos-1-ylimino)methylamino]-1-(5-phospho-beta-D-ribosyl)imidazole-4-carboxamide. Its pathway is amino-acid biosynthesis; L-histidine biosynthesis; L-histidine from 5-phospho-alpha-D-ribose 1-diphosphate: step 4/9. In Thermomicrobium roseum (strain ATCC 27502 / DSM 5159 / P-2), this protein is 1-(5-phosphoribosyl)-5-[(5-phosphoribosylamino)methylideneamino] imidazole-4-carboxamide isomerase.